Here is a 99-residue protein sequence, read N- to C-terminus: Integration host factor subunit alpha (99 aa).

It belongs to the bacterial histone-like protein family. As to quaternary structure, heterodimer of an alpha and a beta chain.

This protein is one of the two subunits of integration host factor, a specific DNA-binding protein that functions in genetic recombination as well as in transcriptional and translational control. This is Integration host factor subunit alpha from Thioalkalivibrio sulfidiphilus (strain HL-EbGR7).